The sequence spans 368 residues: 7,8-didemethyl-8-hydroxy-5-deazariboflavin synthase (368 aa).

In terms of domain architecture, Radical SAM core spans 36–272 (LSYCRNVFLP…EEVSVQVPPN (237 aa)). Residues Cys-50, Cys-54, and Cys-57 each contribute to the [4Fe-4S] cluster site.

Belongs to the radical SAM superfamily. CofG family. As to quaternary structure, consists of two subunits, CofG and CofH. Requires [4Fe-4S] cluster as cofactor.

It carries out the reaction 5-amino-5-(4-hydroxybenzyl)-6-(D-ribitylimino)-5,6-dihydrouracil + S-adenosyl-L-methionine = 7,8-didemethyl-8-hydroxy-5-deazariboflavin + 5'-deoxyadenosine + L-methionine + NH4(+) + H(+). Its pathway is cofactor biosynthesis; coenzyme F0 biosynthesis. Functionally, catalyzes the radical-mediated synthesis of 7,8-didemethyl-8-hydroxy-5-deazariboflavin from 5-amino-5-(4-hydroxybenzyl)-6-(D-ribitylimino)-5,6-dihydrouracil. The chain is 7,8-didemethyl-8-hydroxy-5-deazariboflavin synthase from Haloarcula marismortui (strain ATCC 43049 / DSM 3752 / JCM 8966 / VKM B-1809) (Halobacterium marismortui).